Consider the following 439-residue polypeptide: Xylose isomerase (439 aa).

Residues His-101 and Asp-104 contribute to the active site. Glu-232, Glu-268, His-271, Asp-296, Asp-307, Asp-309, and Asp-339 together coordinate Mg(2+).

Belongs to the xylose isomerase family. As to quaternary structure, homotetramer. The cofactor is Mg(2+).

It localises to the cytoplasm. It catalyses the reaction alpha-D-xylose = alpha-D-xylulofuranose. In Photorhabdus laumondii subsp. laumondii (strain DSM 15139 / CIP 105565 / TT01) (Photorhabdus luminescens subsp. laumondii), this protein is Xylose isomerase.